Consider the following 156-residue polypeptide: uncharacterized protein (156 aa).

It is found in the mitochondrion. This is an uncharacterized protein from Paramecium tetraurelia.